Consider the following 176-residue polypeptide: Large ribosomal subunit protein eL20 (176 aa).

It belongs to the eukaryotic ribosomal protein eL20 family. Component of the large ribosomal subunit.

Its subcellular location is the cytoplasm. Its function is as follows. Component of the large ribosomal subunit. The ribosome is a large ribonucleoprotein complex responsible for the synthesis of proteins in the cell. The sequence is that of Large ribosomal subunit protein eL20 (rpl18a) from Salmo salar (Atlantic salmon).